Reading from the N-terminus, the 151-residue chain is Ribosomal RNA large subunit methyltransferase H (151 aa).

Residues Ala-101 and 119 to 124 (LSEMTF) contribute to the S-adenosyl-L-methionine site.

This sequence belongs to the RNA methyltransferase RlmH family. Homodimer.

The protein resides in the cytoplasm. It catalyses the reaction pseudouridine(1915) in 23S rRNA + S-adenosyl-L-methionine = N(3)-methylpseudouridine(1915) in 23S rRNA + S-adenosyl-L-homocysteine + H(+). Functionally, specifically methylates the pseudouridine at position 1915 (m3Psi1915) in 23S rRNA. The polypeptide is Ribosomal RNA large subunit methyltransferase H (Helicobacter pylori (strain G27)).